The following is a 199-amino-acid chain: Small ribosomal subunit protein uS4 (199 aa).

An S4 RNA-binding domain is found at 91-154; it reads SRLDNLVYRM…RGLQLIKDAL (64 aa).

The protein belongs to the universal ribosomal protein uS4 family. In terms of assembly, part of the 30S ribosomal subunit. Contacts protein S5. The interaction surface between S4 and S5 is involved in control of translational fidelity.

In terms of biological role, one of the primary rRNA binding proteins, it binds directly to 16S rRNA where it nucleates assembly of the body of the 30S subunit. Its function is as follows. With S5 and S12 plays an important role in translational accuracy. The sequence is that of Small ribosomal subunit protein uS4 from Brevibacillus brevis (strain 47 / JCM 6285 / NBRC 100599).